The sequence spans 157 residues: tRNA (cytidine(34)-2'-O)-methyltransferase (157 aa).

Residues Leu78, Gly100, Ile122, and Ser130 each contribute to the S-adenosyl-L-methionine site.

It belongs to the class IV-like SAM-binding methyltransferase superfamily. RNA methyltransferase TrmH family. TrmL subfamily. Homodimer.

It is found in the cytoplasm. It carries out the reaction cytidine(34) in tRNA + S-adenosyl-L-methionine = 2'-O-methylcytidine(34) in tRNA + S-adenosyl-L-homocysteine + H(+). It catalyses the reaction 5-carboxymethylaminomethyluridine(34) in tRNA(Leu) + S-adenosyl-L-methionine = 5-carboxymethylaminomethyl-2'-O-methyluridine(34) in tRNA(Leu) + S-adenosyl-L-homocysteine + H(+). Its function is as follows. Methylates the ribose at the nucleotide 34 wobble position in the two leucyl isoacceptors tRNA(Leu)(CmAA) and tRNA(Leu)(cmnm5UmAA). Catalyzes the methyl transfer from S-adenosyl-L-methionine to the 2'-OH of the wobble nucleotide. The sequence is that of tRNA (cytidine(34)-2'-O)-methyltransferase from Escherichia coli O6:H1 (strain CFT073 / ATCC 700928 / UPEC).